The following is a 430-amino-acid chain: Tol-Pal system protein TolB (430 aa).

The first 26 residues, 1 to 26, serve as a signal peptide directing secretion; that stretch reads MSLMTKLGLRTLVASCLIAVGGAAHA.

This sequence belongs to the TolB family. The Tol-Pal system is composed of five core proteins: the inner membrane proteins TolA, TolQ and TolR, the periplasmic protein TolB and the outer membrane protein Pal. They form a network linking the inner and outer membranes and the peptidoglycan layer.

Its subcellular location is the periplasm. Functionally, part of the Tol-Pal system, which plays a role in outer membrane invagination during cell division and is important for maintaining outer membrane integrity. This is Tol-Pal system protein TolB from Paraburkholderia phytofirmans (strain DSM 17436 / LMG 22146 / PsJN) (Burkholderia phytofirmans).